A 255-amino-acid chain; its full sequence is Aliphatic sulfonates import ATP-binding protein SsuB (255 aa).

The ABC transporter domain occupies L12 to L233. Residue G44–S51 coordinates ATP.

It belongs to the ABC transporter superfamily. Aliphatic sulfonates importer (TC 3.A.1.17.2) family. In terms of assembly, the complex is composed of two ATP-binding proteins (SsuB), two transmembrane proteins (SsuC) and a solute-binding protein (SsuA).

Its subcellular location is the cell inner membrane. It carries out the reaction ATP + H2O + aliphatic sulfonate-[sulfonate-binding protein]Side 1 = ADP + phosphate + aliphatic sulfonateSide 2 + [sulfonate-binding protein]Side 1.. Its function is as follows. Part of the ABC transporter complex SsuABC involved in aliphatic sulfonates import. Responsible for energy coupling to the transport system. This chain is Aliphatic sulfonates import ATP-binding protein SsuB, found in Shigella flexneri serotype 5b (strain 8401).